A 71-amino-acid polypeptide reads, in one-letter code: Large ribosomal subunit protein uL29 (71 aa).

The interval 32 to 51 is disordered; that stretch reads GVNKSTGGAPSNPGKISETK.

It belongs to the universal ribosomal protein uL29 family.

The protein is Large ribosomal subunit protein uL29 of Methanococcus maripaludis (strain DSM 14266 / JCM 13030 / NBRC 101832 / S2 / LL).